We begin with the raw amino-acid sequence, 346 residues long: L-glyceraldehyde 3-phosphate reductase (346 aa).

Trp33, Asp61, Tyr66, Ser168, Gln193, Thr223, Leu225, Gln227, Lys233, Ser303, Gln307, and Asn311 together coordinate NADP(+).

It belongs to the shaker potassium channel beta subunit family. Homotetramer. Homooctamer.

It catalyses the reaction a primary alcohol + NADP(+) = an aldehyde + NADPH + H(+). The enzyme catalyses hydroxyacetone + NADP(+) = methylglyoxal + NADPH + H(+). Aldo-keto reductase that catalyzes the stereospecific, NADPH-dependent reduction of L-glyceraldehyde 3-phosphate (L-GAP) to L-glycerol 3-phosphate (L-G3P). The physiological role of Gpr is the detoxification of L-GAP, which may be formed via non-enzymatic and/or enzymatic racemization of D-GAP. Also contributes to cellular methylglyoxal detoxification by catalyzing the NADPH-dependent conversion of methylglyoxal to acetol. However, the catalytic efficiency of methylglyoxal reductase activity is more than 2 orders of magnitude lower than the L-GAP reductase activity. In addition, exhibits activity with glyoxal and probably plays a significant role in detoxification of glyoxal in vivo. Shows broad specificity and can use aromatic aldehydes such as 4-nitrobenzaldehyde and benzaldehyde, D,L-glyceraldehyde, phenylglyoxal, isatin and the model substrate 4-nitrobenzaldehyde. The protein is L-glyceraldehyde 3-phosphate reductase of Escherichia coli (strain K12).